Reading from the N-terminus, the 672-residue chain is Amidase chyE (672 aa).

Cysteine 2 (nucleophile) is an active-site residue. The 218-residue stretch at 2-219 (CGISAFLCHP…PGHYLISRPN (218 aa)) folds into the Glutamine amidotransferase type-2 domain. In terms of domain architecture, Asparagine synthetase spans 250–639 (VRKRLLEAVK…TQEAVEKAFT (390 aa)).

It belongs to the asparagine synthetase family.

It functions in the pathway pigment biosynthesis. Functionally, amidase; part of the gene cluster that mediates the biosynthesis of the yellow pigment chrysogine. the NRPS chyA mediates the condensation of anthranilic acid and alanine into the intermediate 2-(2-aminopropanamido)benzoic acid. The remainder of the pathway is highly branched yielding at least 13 chrysogine-related compounds. The malonyl transferase chyE converts 2-(2-aminopropanamido)benzoic acid and 2-(2-aminopropanamido)benzamidine into 2-(2-(2-carboxyacetamido)propanamido)benzoic acid and 3-((1-((2-carbamoylphenyl)amino)-1-oxopropan-2-yl)amino)-3-oxopropanoic acid, respectively. ChyD is an amidase, being responsible for the amidation of the carboxylic acid moiety of 2-(2-aminopropanamido)benzoic acid, 2-(2-(2-carboxyacetamido)propanamido)benzoic acid and 2-(2-((4-amino-1-carboxy-4-oxobutyl)amino)propanamido)benzoic acid. ChyC is involved in the same reactions as ChyD, but plays a more minor role in the amidation reactions compared to chyD. The oxidoreductases chyH and chyM are involved in oxidation reactions that form N-pyruvoylanthranilamide from 2-(2-aminopropanamido)benzamidine and (1-((2-carbamoylphenyl)amino)-1-oxopropan-2-yl)glutamine, respectively. N-pyruvoylanthranilamide is further converted via two further branches in the pathway, yielding chrysogine and additional chrysogine-related coumpounds. Chrysogine is likely formed by a spontaneous ring closure from N-pyruvoylanthranilamide. The protein is Amidase chyE of Penicillium rubens (strain ATCC 28089 / DSM 1075 / NRRL 1951 / Wisconsin 54-1255) (Penicillium chrysogenum).